The chain runs to 377 residues: Protein RecA (377 aa).

Residue 82–89 coordinates ATP; the sequence is GPESSGKT. The interval 345-377 is disordered; the sequence is EGSEVSANSMRPLASAARQASSRPNLSQVSANG. Residues 362–377 are compositionally biased toward polar residues; that stretch reads RQASSRPNLSQVSANG.

Belongs to the RecA family.

The protein resides in the cytoplasm. In terms of biological role, can catalyze the hydrolysis of ATP in the presence of single-stranded DNA, the ATP-dependent uptake of single-stranded DNA by duplex DNA, and the ATP-dependent hybridization of homologous single-stranded DNAs. It interacts with LexA causing its activation and leading to its autocatalytic cleavage. This is Protein RecA from Prochlorococcus marinus (strain NATL2A).